Here is a 269-residue protein sequence, read N- to C-terminus: Diaminopimelate epimerase (269 aa).

Residues N13, Q46, and N65 each coordinate substrate. The active-site Proton donor is the C74. Residues 75 to 76 (GN), N149, N182, and 200 to 201 (ER) contribute to the substrate site. C209 functions as the Proton acceptor in the catalytic mechanism. Substrate is bound at residue 210–211 (GT).

Belongs to the diaminopimelate epimerase family. In terms of assembly, homodimer.

The protein resides in the cytoplasm. The catalysed reaction is (2S,6S)-2,6-diaminopimelate = meso-2,6-diaminopimelate. The protein operates within amino-acid biosynthesis; L-lysine biosynthesis via DAP pathway; DL-2,6-diaminopimelate from LL-2,6-diaminopimelate: step 1/1. In terms of biological role, catalyzes the stereoinversion of LL-2,6-diaminopimelate (L,L-DAP) to meso-diaminopimelate (meso-DAP), a precursor of L-lysine and an essential component of the bacterial peptidoglycan. This chain is Diaminopimelate epimerase, found in Zymomonas mobilis subsp. mobilis (strain ATCC 31821 / ZM4 / CP4).